Consider the following 339-residue polypeptide: Phenylalanine--tRNA ligase alpha subunit (339 aa).

Residue Glu-254 coordinates Mg(2+).

This sequence belongs to the class-II aminoacyl-tRNA synthetase family. Phe-tRNA synthetase alpha subunit type 1 subfamily. In terms of assembly, tetramer of two alpha and two beta subunits. Requires Mg(2+) as cofactor.

The protein localises to the cytoplasm. The enzyme catalyses tRNA(Phe) + L-phenylalanine + ATP = L-phenylalanyl-tRNA(Phe) + AMP + diphosphate + H(+). The sequence is that of Phenylalanine--tRNA ligase alpha subunit from Dictyoglomus thermophilum (strain ATCC 35947 / DSM 3960 / H-6-12).